We begin with the raw amino-acid sequence, 206 residues long: 2,3-bisphosphoglycerate-dependent phosphoglycerate mutase (206 aa).

Substrate contacts are provided by residues 9-16 (RHGQSEWN), 22-23 (TG), Arg61, 88-91 (ERDY), Lys99, 115-116 (RR), and 159-160 (GN). The Tele-phosphohistidine intermediate role is filled by His10. Glu88 serves as the catalytic Proton donor/acceptor.

It belongs to the phosphoglycerate mutase family. BPG-dependent PGAM subfamily. Homodimer.

The enzyme catalyses (2R)-2-phosphoglycerate = (2R)-3-phosphoglycerate. It functions in the pathway carbohydrate degradation; glycolysis; pyruvate from D-glyceraldehyde 3-phosphate: step 3/5. Catalyzes the interconversion of 2-phosphoglycerate and 3-phosphoglycerate. The protein is 2,3-bisphosphoglycerate-dependent phosphoglycerate mutase of Brucella ovis (strain ATCC 25840 / 63/290 / NCTC 10512).